Here is a 141-residue protein sequence, read N- to C-terminus: Hemoglobin subunit alpha (141 aa).

In terms of domain architecture, Globin spans 1–141; sequence VLSPADKTNV…VSTVLTSKYR (141 aa). S3 carries the phosphoserine modification. At K7 the chain carries N6-succinyllysine. T8 is subject to Phosphothreonine. K11 carries the N6-succinyllysine modification. K16 carries the post-translational modification N6-acetyllysine; alternate. K16 carries the N6-succinyllysine; alternate modification. The residue at position 24 (Y24) is a Phosphotyrosine. Phosphoserine is present on S35. K40 carries the N6-succinyllysine modification. At S49 the chain carries Phosphoserine. Residue H58 coordinates O2. Position 87 (H87) interacts with heme b. Residue S102 is modified to Phosphoserine. T108 carries the phosphothreonine modification. Phosphoserine is present on residues S124 and S131. Residues T134 and T137 each carry the phosphothreonine modification. S138 is modified (phosphoserine).

It belongs to the globin family. As to quaternary structure, heterotetramer of two alpha chains and two beta chains. Red blood cells.

In terms of biological role, involved in oxygen transport from the lung to the various peripheral tissues. Functionally, hemopressin acts as an antagonist peptide of the cannabinoid receptor CNR1. Hemopressin-binding efficiently blocks cannabinoid receptor CNR1 and subsequent signaling. The chain is Hemoglobin subunit alpha (HBA) from Gorilla gorilla gorilla (Western lowland gorilla).